The chain runs to 446 residues: MMITLRKLPLAVAVAAGVMSAQAMAVDFHGYARSGIGWTGSGGEQQCFQTTGAQSKYRLGNECETYAELKLGQEVWKEGDKSFYFDTNVAYSVAQQNDWEATDPAFREANVQGKNLIEWLPGSTIWAGKRFYQRHDVHMIDFYYWDISGPGAGLENIDVGFGKLSLAATRSSEAGGSSSFASNNIYDYTNETANDVFDVRLAQMEINPGGTLELGVDYGRANLRDNYRLVDGASKDGWLFTAEHTQSVLKGFNKFVVQYATDSMTSQGKGLSQGSGVAFDNEKFAYNINNNGHMLRILDHGAISMGDNWDMMYVGMYQDINWDNDNGTKWWTVGIRPMYKWTPIMSTVMEIGYDNVESQRTGDKNNQYKITLAQQWQAGDSIWSRPAIRVFATYAKWDEKWGYDYTGNADNNANFGKAVPADFNGGSFGRGDSDEWTFGAQMEIWW.

The signal sequence occupies residues 1–25; the sequence is MMITLRKLPLAVAVAAGVMSAQAMA.

The protein belongs to the porin LamB (TC 1.B.3) family. Homotrimer formed of three 18-stranded antiparallel beta-barrels, containing three independent channels.

The protein localises to the cell outer membrane. It catalyses the reaction beta-maltose(in) = beta-maltose(out). Involved in the transport of maltose and maltodextrins. This is Maltoporin from Escherichia coli (strain K12 / MC4100 / BW2952).